The sequence spans 515 residues: Alpha-1B adrenergic receptor (515 aa).

Residues Met-1–Ala-45 are Extracellular-facing. 3 N-linked (GlcNAc...) asparagine glycosylation sites follow: Asn-10, Asn-24, and Asn-34. The chain crosses the membrane as a helical span at residues Ile-46 to Val-70. Over Ala-71–Phe-83 the chain is Cytoplasmic. Residues Ile-84–Leu-105 traverse the membrane as a helical segment. Residues Glu-106–Arg-115 lie on the Extracellular side of the membrane. A helical membrane pass occupies residues Ile-116–Ile-141. Cys-118 and Cys-195 are oxidised to a cystine. Topologically, residues Asp-142–Lys-161 are cytoplasmic. A helical membrane pass occupies residues Ala-162–Leu-182. The Extracellular segment spans residues Gly-183–Pro-201. A helical membrane pass occupies residues Phe-202–Cys-224. Residues Arg-225–Thr-295 are Cytoplasmic-facing. Position 264 is a phosphothreonine (Thr-264). A helical transmembrane segment spans residues Leu-296 to Leu-319. Over Phe-320 to Pro-326 the chain is Extracellular. A helical transmembrane segment spans residues Asp-327–Ser-351. Over Ser-352–Phe-515 the chain is Cytoplasmic. Cys-365 is lipidated: S-palmitoyl cysteine. The short motif at Arg-368–Arg-378 is the Nuclear localization signal element. Disordered stretches follow at residues Gly-392 to Gly-430 and Leu-474 to Phe-515. Polar residues-rich tracts occupy residues Ser-410 to Pro-424 and Gly-484 to Ala-498.

This sequence belongs to the G-protein coupled receptor 1 family. Adrenergic receptor subfamily. ADRA1B sub-subfamily. In terms of assembly, homo- and heterooligomer. Heterooligomerizes with ADRA1B homooligomers in cardiac myocytes. Interacts with CAVIN4.

The protein resides in the nucleus membrane. It localises to the cell membrane. It is found in the cytoplasm. Its subcellular location is the membrane. The protein localises to the caveola. Its function is as follows. This alpha-adrenergic receptor mediates its action by association with G proteins that activate a phosphatidylinositol-calcium second messenger system. Its effect is mediated by G(q) and G(11) proteins. Nuclear ADRA1A-ADRA1B heterooligomers regulate phenylephrine (PE)-stimulated ERK signaling in cardiac myocytes. The polypeptide is Alpha-1B adrenergic receptor (Adra1b) (Rattus norvegicus (Rat)).